Here is a 171-residue protein sequence, read N- to C-terminus: NADH-quinone oxidoreductase subunit B (171 aa).

Residues Cys-34, Cys-35, Cys-99, and Cys-128 each coordinate [4Fe-4S] cluster.

It belongs to the complex I 20 kDa subunit family. As to quaternary structure, NDH-1 is composed of 14 different subunits. Subunits NuoB, C, D, E, F, and G constitute the peripheral sector of the complex. [4Fe-4S] cluster serves as cofactor.

It is found in the cell inner membrane. It carries out the reaction a quinone + NADH + 5 H(+)(in) = a quinol + NAD(+) + 4 H(+)(out). Its function is as follows. NDH-1 shuttles electrons from NADH, via FMN and iron-sulfur (Fe-S) centers, to quinones in the respiratory chain. The immediate electron acceptor for the enzyme in this species is believed to be ubiquinone. Couples the redox reaction to proton translocation (for every two electrons transferred, four hydrogen ions are translocated across the cytoplasmic membrane), and thus conserves the redox energy in a proton gradient. The chain is NADH-quinone oxidoreductase subunit B from Sulfurihydrogenibium sp. (strain YO3AOP1).